A 506-amino-acid polypeptide reads, in one-letter code: Maturase K (506 aa).

The protein belongs to the intron maturase 2 family. MatK subfamily.

The protein localises to the plastid. It localises to the chloroplast. In terms of biological role, usually encoded in the trnK tRNA gene intron. Probably assists in splicing its own and other chloroplast group II introns. The polypeptide is Maturase K (Lactuca sativa (Garden lettuce)).